The chain runs to 557 residues: (-)-germacrene D synthase (557 aa).

Residues Asp310, Asp314, and Glu462 each coordinate Mg(2+). The DDXXD motif motif lies at 310-314; it reads DDIYD.

This sequence belongs to the terpene synthase family. Tpsa subfamily. It depends on Mg(2+) as a cofactor. As to expression, expressed in flowers. Detected in stems, young leaves and tendrils.

The protein resides in the cytoplasm. The enzyme catalyses (2E,6E)-farnesyl diphosphate + H2O = (1E,4S,5E,7R)-germacra-1(10),5-dien-11-ol + diphosphate. The catalysed reaction is (2E,6E)-farnesyl diphosphate = (-)-germacrene D + diphosphate. The protein operates within secondary metabolite biosynthesis; terpenoid biosynthesis. In terms of biological role, involved in the biosynthesis of germacrene D. Can use farnesyl diphosphate as substrate, but not geranyl diphosphate or geranylgeranyl diphosphate. Produces mainly (-)-germacrene D along with gamma-cadinene. This is (-)-germacrene D synthase from Vitis vinifera (Grape).